Here is a 178-residue protein sequence, read N- to C-terminus: CDP-archaeol synthase (178 aa).

Helical transmembrane passes span 7–27 (LFVSFWFILPAYTANAMACIF), 56–76 (FFGVFFGIVTAIIQYLVSNLG), 91–111 (VIIGFLLSFGALFGDMFGSFL), 125–145 (VLDQITFIVFALIFVSYYYLV), and 149–169 (ISITLLILSPVVHILSNIIAY).

Belongs to the CDP-archaeol synthase family. Requires Mg(2+) as cofactor.

The protein localises to the cell membrane. It carries out the reaction 2,3-bis-O-(geranylgeranyl)-sn-glycerol 1-phosphate + CTP + H(+) = CDP-2,3-bis-O-(geranylgeranyl)-sn-glycerol + diphosphate. It functions in the pathway membrane lipid metabolism; glycerophospholipid metabolism. Functionally, catalyzes the formation of CDP-2,3-bis-(O-geranylgeranyl)-sn-glycerol (CDP-archaeol) from 2,3-bis-(O-geranylgeranyl)-sn-glycerol 1-phosphate (DGGGP) and CTP. This reaction is the third ether-bond-formation step in the biosynthesis of archaeal membrane lipids. The chain is CDP-archaeol synthase from Methanococcus vannielii (strain ATCC 35089 / DSM 1224 / JCM 13029 / OCM 148 / SB).